Here is a 162-residue protein sequence, read N- to C-terminus: Eukaryotic translation initiation factor 5 (162 aa).

Residues 59–162 form a disordered region; the sequence is PPNLNPAVQG…EKDRMDIFYE (104 aa). Residues 85 to 109 are compositionally biased toward polar residues; the sequence is GDTNGDTSQVDDQNESLEASVNENS. A compositionally biased stretch (basic and acidic residues) spans 148 to 162; the sequence is DLEKREKDRMDIFYE.

It belongs to the eIF-2-beta/eIF-5 family.

Functionally, catalyzes the hydrolysis of GTP bound to the 40S ribosomal initiation complex (40S.mRNA.Met-tRNA[F].eIF-2.GTP) with the subsequent joining of a 60S ribosomal subunit resulting in the release of eIF-2 and the guanine nucleotide. The subsequent joining of a 60S ribosomal subunit results in the formation of a functional 80S initiation complex (80S.mRNA.Met-tRNA[F]). This Tribolium castaneum (Red flour beetle) protein is Eukaryotic translation initiation factor 5.